The primary structure comprises 214 residues: Large ribosomal subunit protein uL16 (214 aa).

At R32 the chain carries Citrulline. K175 participates in a covalent cross-link: Glycyl lysine isopeptide (Lys-Gly) (interchain with G-Cter in SUMO2). A Glycyl lysine isopeptide (Lys-Gly) (interchain with G-Cter in ubiquitin) cross-link involves residue K188.

The protein belongs to the universal ribosomal protein uL16 family. In terms of assembly, component of the large ribosomal subunit. Mature ribosomes consist of a small (40S) and a large (60S) subunit. The 40S subunit contains about 33 different proteins and 1 molecule of RNA (18S). The 60S subunit contains about 49 different proteins and 3 molecules of RNA (28S, 5.8S and 5S). In terms of processing, citrullinated by PADI4. Ufmylated by UFL1.

It is found in the cytoplasm. Functionally, component of the large ribosomal subunit. Plays a role in the formation of actively translating ribosomes. May play a role in the embryonic brain development. This Rattus norvegicus (Rat) protein is Large ribosomal subunit protein uL16.